Reading from the N-terminus, the 474-residue chain is Nitrogenase vanadium-iron protein alpha chain (474 aa).

[8Fe-7S] cluster contacts are provided by cysteine 49, cysteine 75, and cysteine 138. Residues cysteine 257 and histidine 423 each contribute to the [7Fe-V-9S-C-homocitryl] cluster site.

Belongs to the NifD/NifK/NifE/NifN family. Hexamer of two alpha, two beta, and two delta chains. [8Fe-7S] cluster is required as a cofactor. It depends on [7Fe-V-9S-C-homocitryl] cluster as a cofactor.

It carries out the reaction N2 + 8 reduced [2Fe-2S]-[ferredoxin] + 16 ATP + 16 H2O = H2 + 8 oxidized [2Fe-2S]-[ferredoxin] + 2 NH4(+) + 16 ADP + 16 phosphate + 6 H(+). In terms of biological role, this vanadium-iron protein is part of the nitrogenase complex that catalyzes the key enzymatic reactions in nitrogen fixation. The protein is Nitrogenase vanadium-iron protein alpha chain (vnfD) of Azotobacter vinelandii.